Reading from the N-terminus, the 463-residue chain is L-seryl-tRNA(Sec) selenium transferase (463 aa).

Position 295 is an N6-(pyridoxal phosphate)lysine (lysine 295).

The protein belongs to the SelA family. In terms of assembly, homodecamer; pentamer of dimers. Binds only one seryl-tRNA(Sec) per dimer. It depends on pyridoxal 5'-phosphate as a cofactor.

It localises to the cytoplasm. It carries out the reaction L-seryl-tRNA(Sec) + selenophosphate + H(+) = L-selenocysteinyl-tRNA(Sec) + phosphate. It participates in aminoacyl-tRNA biosynthesis; selenocysteinyl-tRNA(Sec) biosynthesis; selenocysteinyl-tRNA(Sec) from L-seryl-tRNA(Sec) (bacterial route): step 1/1. In terms of biological role, converts seryl-tRNA(Sec) to selenocysteinyl-tRNA(Sec) required for selenoprotein biosynthesis. This is L-seryl-tRNA(Sec) selenium transferase from Escherichia coli O17:K52:H18 (strain UMN026 / ExPEC).